The sequence spans 505 residues: Alpha-ketoglutarate-dependent dioxygenase FTO (505 aa).

Threonine 4 bears the Phosphothreonine mark. Residues 32–327 (TPKDDEFYQQ…SSTHRVAECS (296 aa)) form a fe2OG dioxygenase domain region. Positions 96 and 108 each coordinate substrate. Residue asparagine 205 participates in 2-oxoglutarate binding. The segment at 213 to 224 (PYLKEEPYFGMG) is loop L1; predicted to block binding of double-stranded DNA or RNA. Position 216 is an N6-acetyllysine (lysine 216). Histidine 231 and aspartate 233 together coordinate Fe cation. Residue 231–234 (HHDE) coordinates substrate. Tyrosine 295 lines the 2-oxoglutarate pocket. Histidine 307 is a Fe cation binding site. 2-oxoglutarate is bound by residues 316–318 (RFS), threonine 320, and arginine 322.

Belongs to the fto family. In terms of assembly, monomer. May also exist as homodimer. Requires Fe(2+) as cofactor.

Its subcellular location is the nucleus. It localises to the nucleus speckle. The protein resides in the cytoplasm. It catalyses the reaction a 5'-end (N(7)-methyl 5'-triphosphoguanosine)-(N(6),2'-O-dimethyladenosine) in mRNA + 2-oxoglutarate + O2 = a 5'-end (N(7)-methyl 5'-triphosphoguanosine)-(2'-O-methyladenosine) in mRNA + formaldehyde + succinate + CO2. The enzyme catalyses an N(6)-methyladenosine in mRNA + 2-oxoglutarate + O2 = an adenosine in mRNA + formaldehyde + succinate + CO2. The catalysed reaction is N(6)-methyladenosine in U6 snRNA + 2-oxoglutarate + O2 = adenosine in U6 snRNA + formaldehyde + succinate + CO2. It carries out the reaction a 5'-end (N(7)-methyl 5'-triphosphoguanosine)-(N(6),2'-O-dimethyladenosine) in U6 snRNA + 2-oxoglutarate + O2 = a 5'-end (N(7)-methyl 5'-triphosphoguanosine)-(2'-O-methyladenosine) in U6 snRNA + formaldehyde + succinate + CO2. It catalyses the reaction an N(1)-methyladenosine in tRNA + 2-oxoglutarate + O2 = an adenosine in tRNA + formaldehyde + succinate + CO2. With respect to regulation, activated by ascorbate. Inhibited by N-oxalylglycine, fumarate and succinate. Functionally, RNA demethylase that mediates oxidative demethylation of different RNA species, such as mRNAs, tRNAs and snRNAs, and acts as a regulator of fat mass, adipogenesis and energy homeostasis. Specifically demethylates N(6)-methyladenosine (m6A) RNA, the most prevalent internal modification of messenger RNA (mRNA) in higher eukaryotes. M6A demethylation by FTO affects mRNA expression and stability. Also able to demethylate m6A in U6 small nuclear RNA (snRNA). Mediates demethylation of N(6),2'-O-dimethyladenosine cap (m6A(m)), by demethylating the N(6)-methyladenosine at the second transcribed position of mRNAs and U6 snRNA. Demethylation of m6A(m) in the 5'-cap by FTO affects mRNA stability by promoting susceptibility to decapping. Also acts as a tRNA demethylase by removing N(1)-methyladenine from various tRNAs. Has no activity towards 1-methylguanine. Has no detectable activity towards double-stranded DNA. Also able to repair alkylated DNA and RNA by oxidative demethylation: demethylates single-stranded RNA containing 3-methyluracil, single-stranded DNA containing 3-methylthymine and has low demethylase activity towards single-stranded DNA containing 1-methyladenine or 3-methylcytosine. Ability to repair alkylated DNA and RNA is however unsure in vivo. Involved in the regulation of fat mass, adipogenesis and body weight, thereby contributing to the regulation of body size and body fat accumulation. Involved in the regulation of thermogenesis and the control of adipocyte differentiation into brown or white fat cells. Regulates activity of the dopaminergic midbrain circuitry via its ability to demethylate m6A in mRNAs. The polypeptide is Alpha-ketoglutarate-dependent dioxygenase FTO (Pongo abelii (Sumatran orangutan)).